The following is a 644-amino-acid chain: Adhesion G-protein coupled receptor F2 (644 aa).

Positions 1–18 are cleaved as a signal peptide; sequence MIPAHWLYCLMLLLPIES. At 19-386 the chain is on the extracellular side; it reads CRILCQASSK…ESPVLTYITY (368 aa). Residues Asn155, Asn219, Asn293, and Asn311 are each glycosylated (N-linked (GlcNAc...) asparagine). A GAIN-B domain is found at 233 to 377; that stretch reads SRGSLGKNFT…SILMSPNTLE (145 aa). Disulfide bonds link Cys329-Cys356 and Cys344-Cys358. A GPS region spans residues 329–377; the sequence is CVGWHSLESRWDWRACKTIQENSRQAVCRCRPNKLYTSFSILMSPNTLE. Residues 387 to 407 traverse the membrane as a helical segment; sequence IGLGISICSLIICLAIEVLVW. The Cytoplasmic portion of the chain corresponds to 408–422; that stretch reads SQVTKTEISYLRHLC. Residues 423–443 form a helical membrane-spanning segment; the sequence is IANIAATLLMADAWFIVASFL. The Extracellular segment spans residues 444–465; it reads SGPVLHHNGCVAATFFVHFFYL. Residues 466–486 traverse the membrane as a helical segment; that stretch reads SVFFWMLAKALLILYGILIVF. Residues 487-493 are Cytoplasmic-facing; it reads HTLPKSC. Residues 494–514 form a helical membrane-spanning segment; that stretch reads LVASLFSVGYGCPLVIAIITL. Over 515–541 the chain is Extracellular; sequence AVTEPGKGYLRPEACWLNWDMTKALLA. The helical transmembrane segment at 542-562 threads the bilayer; it reads FVVPALAIVVVNLITVTMVII. Residues 563 to 585 are Cytoplasmic-facing; the sequence is KTQRAAIGSSMFQEVRAIVRICK. Residues 586–606 traverse the membrane as a helical segment; it reads NIAILTPLLGLTWGFGIATVI. Topologically, residues 607-610 are extracellular; it reads NGHS. Residues 611–631 traverse the membrane as a helical segment; that stretch reads LAFHIIFSLLNALQVSPDAAV.

This sequence belongs to the G-protein coupled receptor 2 family. Adhesion G-protein coupled receptor (ADGR) subfamily. As to expression, mainly expressed in skin and heart, and very weakly in lung and spleen. Detected in all epidermal layers of skin.

The protein localises to the membrane. Orphan receptor. The polypeptide is Adhesion G-protein coupled receptor F2 (Adgrf2) (Mus musculus (Mouse)).